Here is a 473-residue protein sequence, read N- to C-terminus: MKTLYSPRRFYPVETLFNGTLTLAGRDQETTGFAWWAGNARLINLSGKLLGAHVAHAGLIVFWAGAMNLFEVAHFIPEKPMYEQGLILLPHLATLGWGVGPGGEIVDTFPYFVSGILHLISSAVLGFGGIYHALIGPETLEESFPFFGYAWKDRNKMTTILGIHLILLGAGAFLLVLKALFFGGIYDTWAPGGGDVRKITNLTLSPNTIFGFLLKSPFGGEGWIVSVDNLEDIIGGHFWLGSMCIFGGIWHILTKPFAWTRRAFVWSGEAYLSYSLAALSVFGFIACCFVWFNNTAYPSEFYGPTGPEASQAQAFTFLVRDQRLGASVGSAQGPTGLGKYLMRSPTGEIIFGGETMRFWDLRAPWLEPLRGPNGLDLSKLKKDIQPWQERRSAEYMTHAPLGSLNSVGGVATEINAVNFVSPRSWLATSHFVLGFFFFVGHLWHAGRARAAAAGFEKGIDRDLEPVLFMTPLN.

Residues 1-14 constitute a propeptide that is removed on maturation; that stretch reads MKTLYSPRRFYPVE. Residue T15 is modified to N-acetylthreonine. At T15 the chain carries Phosphothreonine. Transmembrane regions (helical) follow at residues 69–93, 134–155, 178–200, 255–275, and 291–312; these read LFEVAHFIPEKPMYEQGLILLPHLA, LIGPETLEESFPFFGYAWKDRN, KALFFGGIYDTWAPGGGDVRKIT, KPFAWTRRAFVWSGEAYLSYS, and WFNNTAYPSEFYGPTGPEASQA. E367 provides a ligand contact to [CaMn4O5] cluster. A helical membrane pass occupies residues 447 to 471; the sequence is RARAAAAGFEKGIDRDLEPVLFMTP.

It belongs to the PsbB/PsbC family. PsbC subfamily. In terms of assembly, PSII is composed of 1 copy each of membrane proteins PsbA, PsbB, PsbC, PsbD, PsbE, PsbF, PsbH, PsbI, PsbJ, PsbK, PsbL, PsbM, PsbT, PsbX, PsbY, PsbZ, Psb30/Ycf12, at least 3 peripheral proteins of the oxygen-evolving complex and a large number of cofactors. It forms dimeric complexes. It depends on Binds multiple chlorophylls and provides some of the ligands for the Ca-4Mn-5O cluster of the oxygen-evolving complex. It may also provide a ligand for a Cl- that is required for oxygen evolution. PSII binds additional chlorophylls, carotenoids and specific lipids. as a cofactor.

It localises to the plastid. Its subcellular location is the chloroplast thylakoid membrane. Its function is as follows. One of the components of the core complex of photosystem II (PSII). It binds chlorophyll and helps catalyze the primary light-induced photochemical processes of PSII. PSII is a light-driven water:plastoquinone oxidoreductase, using light energy to abstract electrons from H(2)O, generating O(2) and a proton gradient subsequently used for ATP formation. In Welwitschia mirabilis (Tree tumbo), this protein is Photosystem II CP43 reaction center protein.